A 195-amino-acid polypeptide reads, in one-letter code: SAGA-associated factor 11 homolog (195 aa).

Residues 1-22 form a disordered region; that stretch reads MSAANMPTTTGAQGSGNQVPRT. The SGF11-type zinc-finger motif lies at 105–126; sequence CTCPNCDRLVAAARFAPHLEKC. The disordered stretch occupies residues 140-195; sequence RLATKEGATSAHLHSSGNTGGTDDEDDVDWSSDKRRKKSNQNSRNNGSKKNNGKTF. A Phosphoserine modification is found at serine 171. The segment covering 179–195 has biased composition (low complexity); it reads NQNSRNNGSKKNNGKTF.

It belongs to the SGF11 family. Component of some SAGA transcription coactivator-HAT complexes, at least composed of Ada2b, not/nonstop, Pcaf/Gcn5, Sgf11 and Spt3. Within the SAGA complex, Sgf11, e(y)2, and not/nonstop form an additional subcomplex of SAGA called the DUB module (deubiquitination module). Interacts directly with not/nonstop. Interacts with the AMEX complex component xmas-2. Interacts with Cbp80; important for promoter recruitment of Sgf11 that is not associated with the DUB module.

The protein resides in the nucleus. The protein localises to the nucleoplasm. It localises to the cytoplasm. Its function is as follows. Component of the transcription regulatory histone acetylation (HAT) complex SAGA, a multiprotein complex that activates transcription by remodeling chromatin and mediating histone acetylation and deubiquitination. Within the SAGA complex, participates in a subcomplex that specifically deubiquitinates histone H2B. The SAGA complex is recruited to specific gene promoters by activators, where it is required for transcription. Required for nuclear receptor-mediated transactivation. Binds independently on SAGA to promoters in an RNA-dependent manner. Binds to mRNA and is essential for total mRNA export from the nucleus. Required to counteract heterochromatin silencing. Controls the development of neuronal connectivity in visual system by being required for accurate axon targeting in the optic lobe. Required for expression of ecdysone-induced genes such as br/broad. The protein is SAGA-associated factor 11 homolog of Drosophila sechellia (Fruit fly).